The following is a 309-amino-acid chain: L-aminoadipate-semialdehyde dehydrogenase-phosphopantetheinyl transferase (309 aa).

Residues Arg47, 86 to 91, and 108 to 111 each bind CoA; these read RTAKGK and NISH. The Mg(2+) site is built by Asp129 and Glu181. 181–185 contributes to the CoA binding site; the sequence is ESFIK. Ser258 bears the Phosphoserine mark.

It belongs to the P-Pant transferase superfamily. AcpS family. In terms of assembly, monomer. Mg(2+) is required as a cofactor.

Its subcellular location is the cytoplasm. It is found in the cytosol. It catalyses the reaction apo-[ACP] + CoA = holo-[ACP] + adenosine 3',5'-bisphosphate + H(+). The catalysed reaction is apo-[ACP] + acetyl-CoA = acetyl-[ACP] + adenosine 3',5'-bisphosphate + H(+). Its function is as follows. Catalyzes the post-translational modification of target proteins by phosphopantetheine. Can transfer the 4'-phosphopantetheine moiety from coenzyme A, regardless of whether the CoA is presented in the free thiol form or as an acetyl thioester, to a serine residue of a broad range of acceptors including the acyl carrier domain of FASN. The sequence is that of L-aminoadipate-semialdehyde dehydrogenase-phosphopantetheinyl transferase (AASDHPPT) from Pongo abelii (Sumatran orangutan).